We begin with the raw amino-acid sequence, 56 residues long: Large ribosomal subunit protein bL33 (56 aa).

This sequence belongs to the bacterial ribosomal protein bL33 family.

The polypeptide is Large ribosomal subunit protein bL33 (Aliarcobacter butzleri (strain RM4018) (Arcobacter butzleri)).